Consider the following 70-residue polypeptide: Small ribosomal subunit protein bS21B (70 aa).

This sequence belongs to the bacterial ribosomal protein bS21 family.

This Cupriavidus metallidurans (strain ATCC 43123 / DSM 2839 / NBRC 102507 / CH34) (Ralstonia metallidurans) protein is Small ribosomal subunit protein bS21B.